A 354-amino-acid chain; its full sequence is Selenide, water dikinase (354 aa).

The active site involves Sec21. Sec21 is a non-standard amino acid (selenocysteine). ATP-binding positions include Lys24 and 51-53 (TSD). A Mg(2+)-binding site is contributed by Asp54. Residues Asp71, Asp94, and 141-143 (GHT) each bind ATP. Asp94 contacts Mg(2+). Asp229 provides a ligand contact to Mg(2+).

The protein belongs to the selenophosphate synthase 1 family. Class I subfamily. In terms of assembly, homodimer. The cofactor is Mg(2+).

The catalysed reaction is hydrogenselenide + ATP + H2O = selenophosphate + AMP + phosphate + 2 H(+). Synthesizes selenophosphate from selenide and ATP. This Treponema denticola (strain ATCC 35405 / DSM 14222 / CIP 103919 / JCM 8153 / KCTC 15104) protein is Selenide, water dikinase.